Reading from the N-terminus, the 183-residue chain is Ribosome rescue factor SmrB (183 aa).

Residues 98-173 (LDLHGLTQLQ…GDAALLVLIE (76 aa)) enclose the Smr domain.

Belongs to the SmrB family. In terms of assembly, associates with collided ribosomes, but not with correctly translating polysomes.

Acts as a ribosome collision sensor. Detects stalled/collided disomes (pairs of ribosomes where the leading ribosome is stalled and a second ribosome has collided with it) and endonucleolytically cleaves mRNA at the 5' boundary of the stalled ribosome. Stalled/collided disomes form a new interface (primarily via the 30S subunits) that binds SmrB. Cleaved mRNA becomes available for tmRNA ligation, leading to ribosomal subunit dissociation and rescue of stalled ribosomes. This Escherichia fergusonii (strain ATCC 35469 / DSM 13698 / CCUG 18766 / IAM 14443 / JCM 21226 / LMG 7866 / NBRC 102419 / NCTC 12128 / CDC 0568-73) protein is Ribosome rescue factor SmrB.